A 197-amino-acid chain; its full sequence is Imidazoleglycerol-phosphate dehydratase (197 aa).

This sequence belongs to the imidazoleglycerol-phosphate dehydratase family.

Its subcellular location is the cytoplasm. The catalysed reaction is D-erythro-1-(imidazol-4-yl)glycerol 3-phosphate = 3-(imidazol-4-yl)-2-oxopropyl phosphate + H2O. The protein operates within amino-acid biosynthesis; L-histidine biosynthesis; L-histidine from 5-phospho-alpha-D-ribose 1-diphosphate: step 6/9. This is Imidazoleglycerol-phosphate dehydratase from Thioalkalivibrio sulfidiphilus (strain HL-EbGR7).